A 352-amino-acid chain; its full sequence is Ribosomal RNA large subunit methyltransferase M (352 aa).

Residues Ser184, 217–220 (APGG), Asp236, Asp256, and Asp272 each bind S-adenosyl-L-methionine. The Proton acceptor role is filled by Lys301.

The protein belongs to the class I-like SAM-binding methyltransferase superfamily. RNA methyltransferase RlmE family. RlmM subfamily. In terms of assembly, monomer.

The protein localises to the cytoplasm. The enzyme catalyses cytidine(2498) in 23S rRNA + S-adenosyl-L-methionine = 2'-O-methylcytidine(2498) in 23S rRNA + S-adenosyl-L-homocysteine + H(+). Catalyzes the 2'-O-methylation at nucleotide C2498 in 23S rRNA. This Pseudomonas aeruginosa (strain LESB58) protein is Ribosomal RNA large subunit methyltransferase M.